Reading from the N-terminus, the 117-residue chain is MLPVNPRDLEKMMRRLGIKVEQLSADEARIVLGSGETMVFRSPTVIVMRAKGQPPMVYLVGDYTVEKPREETAAEITEEDVALVAEQAGVSMEEARKALEESGGDIAEAILRLKGEE.

Residues 3–72 (PVNPRDLEKM…YTVEKPREET (70 aa)) form the NAC-A/B domain.

This sequence belongs to the NAC-alpha family. In terms of assembly, homodimer. Interacts with the ribosome. Binds ribosomal RNA.

Its function is as follows. Contacts the emerging nascent chain on the ribosome. This Aeropyrum pernix (strain ATCC 700893 / DSM 11879 / JCM 9820 / NBRC 100138 / K1) protein is Nascent polypeptide-associated complex protein.